A 554-amino-acid polypeptide reads, in one-letter code: Sesquithujene synthase A (554 aa).

Mg(2+)-binding residues include aspartate 308 and aspartate 312. The substrate site is built by aspartate 308 and aspartate 312. The short motif at 308–312 is the DDXXD motif element; it reads DDMFD. Residues 407–411 form a determine the stereoselectivity of the enzyme region; the sequence is SIGAN. Residues arginine 449 and asparagine 452 each contribute to the substrate site. Mg(2+) is bound by residues asparagine 452, serine 456, and glutamate 460.

The protein belongs to the terpene synthase family. In terms of assembly, monomer. Mg(2+) serves as cofactor. The cofactor is Mn(2+). Highly expressed in the husk. Detected in leaves.

The protein resides in the cytoplasm. It catalyses the reaction (2E,6E)-farnesyl diphosphate = sesquithujene + diphosphate. The enzyme catalyses (2Z,6Z)-farnesyl diphosphate = (1S,5S,6S)-alpha-bergamotene + diphosphate. It carries out the reaction (2E,6E)-farnesyl diphosphate = (E)-beta-farnesene + diphosphate. The catalysed reaction is (2E,6E)-farnesyl diphosphate = (S)-beta-bisabolene + diphosphate. It catalyses the reaction (2Z,6E)-farnesyl diphosphate = (-)-beta-curcumene + diphosphate. The enzyme catalyses (2E,6E)-farnesyl diphosphate = gamma-curcumene + diphosphate. It carries out the reaction (2E,6E)-farnesyl diphosphate = sesquisabinene B + diphosphate. It participates in secondary metabolite biosynthesis; terpenoid biosynthesis. In terms of biological role, sesquiterpene synthase involved in the production after herbivore attack of a blend of volatiles that attracts natural enemies of herbivores. Converts farnesyl diphosphate to sesquithujene, (S)-beta-bisabolene, (Z)-alpha-bergamotene, sesquisabinene B and several minor products. Can also act in vitro as a monoterpene synthase, converting geranyl diphosphate to (S)-(-)-limonene, beta-myrcene and 11 other monoterpenes. The protein is Sesquithujene synthase A of Zea mays (Maize).